The primary structure comprises 85 residues: Protein Vpu (85 aa).

The Extracellular segment spans residues 1–7 (MHQENLL). A helical transmembrane segment spans residues 8-28 (ALIALSALCLINVLIWLFNLR). At 29–85 (IYLVQRKQDRREQEILERLRRIKEIRDDSDYESNEEEQQEVMELIHSHGFANPMFEL) the chain is on the cytoplasmic side.

The protein belongs to the HIV-1 VPU protein family. As to quaternary structure, homopentamer. Interacts with host CD4 and BRTC; these interactions induce proteasomal degradation of CD4. Interacts with host BST2; this interaction leads to the degradation of host BST2. Interacts with host FBXW11. Interacts with host AP1M1; this interaction plays a role in the mistrafficking and subsequent degradation of host BST2. Interacts with host RANBP2; this interaction allows Vpu to down-regulate host BLM sumoylation. In terms of processing, phosphorylated by host CK2. This phosphorylation is necessary for interaction with human BTRC and degradation of CD4.

Its subcellular location is the host membrane. With respect to regulation, ion channel activity is inhibited by hexamethylene amiloride in vitro. Its function is as follows. Enhances virion budding by targeting host CD4 and Tetherin/BST2 to proteasome degradation. Degradation of CD4 prevents any unwanted premature interactions between viral Env and its host receptor CD4 in the endoplasmic reticulum. Degradation of antiretroviral protein Tetherin/BST2 is important for virion budding, as BST2 tethers new viral particles to the host cell membrane. Mechanistically, Vpu bridges either CD4 or BST2 to BTRC, a substrate recognition subunit of the Skp1/Cullin/F-box protein E3 ubiquitin ligase, induces their ubiquitination and subsequent proteasomal degradation. The alteration of the E3 ligase specificity by Vpu seems to promote the degradation of host IKBKB, leading to NF-kappa-B down-regulation and subsequent apoptosis. Acts as a viroporin that forms an oligomeric ion channel in membranes. Modulates the host DNA repair mechanisms to promote degradation of nuclear viral cDNA in cells that are already productively infected in order to suppress immune sensing and proviral hyper-integration (superinfection). Manipulates PML-NBs and modulates SUMOylation of host BLM protein thereby enhancing its DNA-end processing activity toward viral unintegrated linear DNA. Also inhibits RAD52-mediated homologous repair of viral cDNA, preventing the generation of dead-end circular forms of single copies of the long terminal repeat and permitting sustained nucleolytic attack. The sequence is that of Protein Vpu from Human immunodeficiency virus type 1 group O (isolate MVP5180) (HIV-1).